The chain runs to 357 residues: 4-hydroxy-3-methylbut-2-en-1-yl diphosphate synthase (flavodoxin) (357 aa).

[4Fe-4S] cluster-binding residues include cysteine 264, cysteine 267, cysteine 299, and glutamate 306.

Belongs to the IspG family. Requires [4Fe-4S] cluster as cofactor.

It catalyses the reaction (2E)-4-hydroxy-3-methylbut-2-enyl diphosphate + oxidized [flavodoxin] + H2O + 2 H(+) = 2-C-methyl-D-erythritol 2,4-cyclic diphosphate + reduced [flavodoxin]. It functions in the pathway isoprenoid biosynthesis; isopentenyl diphosphate biosynthesis via DXP pathway; isopentenyl diphosphate from 1-deoxy-D-xylulose 5-phosphate: step 5/6. Functionally, converts 2C-methyl-D-erythritol 2,4-cyclodiphosphate (ME-2,4cPP) into 1-hydroxy-2-methyl-2-(E)-butenyl 4-diphosphate. The chain is 4-hydroxy-3-methylbut-2-en-1-yl diphosphate synthase (flavodoxin) from Campylobacter jejuni subsp. jejuni serotype O:6 (strain 81116 / NCTC 11828).